The chain runs to 308 residues: Putative proline iminopeptidase (308 aa).

An AB hydrolase-1 domain is found at 30–290 (KPVLYIHGGP…LYVTNNAGHS (261 aa)). Ser105 serves as the catalytic Nucleophile. Asp261 is a catalytic residue. His289 acts as the Proton donor in catalysis.

Belongs to the peptidase S33 family.

The protein resides in the cytoplasm. The catalysed reaction is Release of N-terminal proline from a peptide.. In terms of biological role, specifically catalyzes the removal of N-terminal proline residues from peptides. In Mycoplasma genitalium (strain ATCC 33530 / DSM 19775 / NCTC 10195 / G37) (Mycoplasmoides genitalium), this protein is Putative proline iminopeptidase (pip).